The chain runs to 107 residues: Putative double-stranded DNA mimic protein CGSHiGG_01135 (107 aa).

It belongs to the putative dsDNA mimic protein family.

May act as a double-stranded DNA (dsDNA) mimic. Probably regulates the activity of a dsDNA-binding protein. This Haemophilus influenzae (strain PittGG) protein is Putative double-stranded DNA mimic protein CGSHiGG_01135.